The sequence spans 363 residues: Ataxin-3 (363 aa).

Positions 1–180 constitute a Josephin domain; that stretch reads MESIFHERQE…DCEADQLLQM (180 aa). Cysteine 14 serves as the catalytic Nucleophile. Residue histidine 119 is the Proton acceptor of the active site. The active site involves asparagine 134. Residues 192-209 show a composition bias toward basic and acidic residues; it reads IGEETAQSRDQRLPRSDV. The tract at residues 192-212 is disordered; the sequence is IGEETAQSRDQRLPRSDVDQA. UIM domains follow at residues 227 to 246, 247 to 266, and 337 to 356; these read EDEE…IDME, DEEA…SRQS, and SEED…ARNH. Polar residues predominate over residues 260-290; sequence MQGSRQSEFSNSLPQNASQPPHTSQTDSLSS. Residues 260 to 363 form a disordered region; sequence MQGSRQSEFS…RNHLSTEEKK (104 aa). The span at 353–363 shows a compositional bias: basic and acidic residues; that stretch reads ARNHLSTEEKK.

In terms of tissue distribution, widely expressed.

Its subcellular location is the nucleus matrix. The protein localises to the nucleus. It localises to the lysosome membrane. The enzyme catalyses Thiol-dependent hydrolysis of ester, thioester, amide, peptide and isopeptide bonds formed by the C-terminal Gly of ubiquitin (a 76-residue protein attached to proteins as an intracellular targeting signal).. In terms of biological role, deubiquitinating enzyme involved in protein homeostasis maintenance, transcription, cytoskeleton regulation, myogenesis and degradation of misfolded chaperone substrates. Binds long polyubiquitin chains and trims them, while it has weak or no activity against chains of 4 or less ubiquitins. Involved in degradation of misfolded chaperone substrates via its interaction with STUB1/CHIP: recruited to monoubiquitinated STUB1/CHIP, and restricts the length of ubiquitin chain attached to STUB1/CHIP substrates and preventing further chain extension. Interacts with key regulators of transcription and represses transcription: acts as a histone-binding protein that regulates transcription. Acts as a negative regulator of mTORC1 signaling in response to amino acid deprivation by mediating deubiquitination of RHEB, thereby promoting RHEB inactivation by the TSC-TBC complex. Regulates autophagy via the deubiquitination of 'Lys-402' of BECN1 leading to the stabilization of BECN1. The polypeptide is Ataxin-3 (ATXN3) (Gallus gallus (Chicken)).